A 760-amino-acid chain; its full sequence is 5-methyltetrahydropteroyltriglutamate--homocysteine methyltransferase (760 aa).

5-methyltetrahydropteroyltri-L-glutamate contacts are provided by residues 17–20 (RELK) and lysine 113. L-homocysteine is bound by residues 433–435 (IGS) and glutamate 486. L-methionine-binding positions include 433–435 (IGS) and glutamate 486. 5-methyltetrahydropteroyltri-L-glutamate contacts are provided by residues 517 to 518 (RC) and tryptophan 563. Aspartate 601 provides a ligand contact to L-homocysteine. An L-methionine-binding site is contributed by aspartate 601. A 5-methyltetrahydropteroyltri-L-glutamate-binding site is contributed by glutamate 607. 3 residues coordinate Zn(2+): histidine 643, cysteine 645, and glutamate 667. The active-site Proton donor is the histidine 696. A Zn(2+)-binding site is contributed by cysteine 728.

Belongs to the vitamin-B12 independent methionine synthase family. The cofactor is Zn(2+).

It carries out the reaction 5-methyltetrahydropteroyltri-L-glutamate + L-homocysteine = tetrahydropteroyltri-L-glutamate + L-methionine. The protein operates within amino-acid biosynthesis; L-methionine biosynthesis via de novo pathway; L-methionine from L-homocysteine (MetE route): step 1/1. Its function is as follows. Catalyzes the transfer of a methyl group from 5-methyltetrahydrofolate to homocysteine resulting in methionine formation. In Chromobacterium violaceum (strain ATCC 12472 / DSM 30191 / JCM 1249 / CCUG 213 / NBRC 12614 / NCIMB 9131 / NCTC 9757 / MK), this protein is 5-methyltetrahydropteroyltriglutamate--homocysteine methyltransferase.